We begin with the raw amino-acid sequence, 129 residues long: Replication initiation control protein YabA (129 aa).

Residues 52–71 (LSLTDEATPEPKAETEAEHG) form a disordered region. The segment covering 60-71 (PEPKAETEAEHG) has biased composition (basic and acidic residues). H103, C105, C119, and C122 together coordinate Zn(2+).

The protein belongs to the YabA family. In terms of assembly, homotetramer. Interacts with both DnaA and DnaN, acting as a bridge between these two proteins. The cofactor is Zn(2+).

It is found in the cytoplasm. Its subcellular location is the nucleoid. Involved in control of chromosome replication initiation. Inhibits the cooperative binding of DnaA to the oriC region, thus negatively regulating initiation of chromosome replication. Inhibits the ability of DnaA-ATP to form a helix on DNA; does not disassemble preformed DnaA-DNA helices. Decreases the residence time of DnaA on the chromosome at its binding sites (oriC, replication forks and promoter-binding sites). Tethers DnaA to the replication machinery via the DNA polymerase beta sliding clamp subunit (dnaN). Associates with oriC and other DnaA targets on the chromosome in a DnaA-dependent manner. This is Replication initiation control protein YabA from Listeria monocytogenes serotype 4a (strain HCC23).